A 379-amino-acid chain; its full sequence is Chaperone protein DnaJ (379 aa).

The J domain maps to 5-70 (DYYELLEVSR…QKRAAYDQFG (66 aa)). A CR-type zinc finger spans residues 135–213 (GKEVEITVPR…CHGQGRVRES (79 aa)). Zn(2+) is bound by residues C148, C151, C165, C168, C187, C190, C201, and C204. CXXCXGXG motif repeat units follow at residues 148–155 (CTVCEGSG), 165–172 (CETCQGMG), 187–194 (CPTCHGEG), and 201–208 (CASCHGQG).

It belongs to the DnaJ family. Homodimer. Zn(2+) is required as a cofactor.

Its subcellular location is the cytoplasm. Its function is as follows. Participates actively in the response to hyperosmotic and heat shock by preventing the aggregation of stress-denatured proteins and by disaggregating proteins, also in an autonomous, DnaK-independent fashion. Unfolded proteins bind initially to DnaJ; upon interaction with the DnaJ-bound protein, DnaK hydrolyzes its bound ATP, resulting in the formation of a stable complex. GrpE releases ADP from DnaK; ATP binding to DnaK triggers the release of the substrate protein, thus completing the reaction cycle. Several rounds of ATP-dependent interactions between DnaJ, DnaK and GrpE are required for fully efficient folding. Also involved, together with DnaK and GrpE, in the DNA replication of plasmids through activation of initiation proteins. In Legionella pneumophila (strain Lens), this protein is Chaperone protein DnaJ.